Here is a 246-residue protein sequence, read N- to C-terminus: Cell division protein ZapD (246 aa).

This sequence belongs to the ZapD family. In terms of assembly, interacts with FtsZ.

The protein localises to the cytoplasm. Cell division factor that enhances FtsZ-ring assembly. Directly interacts with FtsZ and promotes bundling of FtsZ protofilaments, with a reduction in FtsZ GTPase activity. The protein is Cell division protein ZapD of Vibrio atlanticus (strain LGP32) (Vibrio splendidus (strain Mel32)).